Consider the following 205-residue polypeptide: GTP cyclohydrolase-2 (205 aa).

A GTP-binding site is contributed by 49–53 (RIHSE). Positions 54, 65, and 67 each coordinate Zn(2+). Residues glutamine 70, 92–94 (EGR), and threonine 114 each bind GTP. Aspartate 126 acts as the Proton acceptor in catalysis. The active-site Nucleophile is arginine 128. The GTP site is built by threonine 149 and lysine 154.

The protein belongs to the GTP cyclohydrolase II family. It depends on Zn(2+) as a cofactor.

It carries out the reaction GTP + 4 H2O = 2,5-diamino-6-hydroxy-4-(5-phosphoribosylamino)-pyrimidine + formate + 2 phosphate + 3 H(+). The protein operates within cofactor biosynthesis; riboflavin biosynthesis; 5-amino-6-(D-ribitylamino)uracil from GTP: step 1/4. Its function is as follows. Catalyzes the conversion of GTP to 2,5-diamino-6-ribosylamino-4(3H)-pyrimidinone 5'-phosphate (DARP), formate and pyrophosphate. In Shewanella piezotolerans (strain WP3 / JCM 13877), this protein is GTP cyclohydrolase-2.